Here is a 172-residue protein sequence, read N- to C-terminus: uncharacterized protein (172 aa).

Residues 12-172 (IRLRCMEDRD…IAVYERKSYN (161 aa)) form the N-acetyltransferase domain.

This is an uncharacterized protein from Bacillus subtilis (strain 168).